We begin with the raw amino-acid sequence, 364 residues long: Uroporphyrinogen decarboxylase (364 aa).

Substrate-binding positions include 28–32 (RQAGR), aspartate 78, tyrosine 160, threonine 215, and histidine 333.

The protein belongs to the uroporphyrinogen decarboxylase family. In terms of assembly, homodimer.

Its subcellular location is the cytoplasm. It carries out the reaction uroporphyrinogen III + 4 H(+) = coproporphyrinogen III + 4 CO2. It functions in the pathway porphyrin-containing compound metabolism; protoporphyrin-IX biosynthesis; coproporphyrinogen-III from 5-aminolevulinate: step 4/4. Functionally, catalyzes the decarboxylation of four acetate groups of uroporphyrinogen-III to yield coproporphyrinogen-III. This Burkholderia pseudomallei (strain 1106a) protein is Uroporphyrinogen decarboxylase.